We begin with the raw amino-acid sequence, 161 residues long: Non-secretory ribonuclease (161 aa).

Positions 1 to 27 (MVPKLFTSQICLLLLLGLMGVEGSLHA) are cleaved as a signal peptide. Trp34 carries a C-linked (Man) tryptophan glycan. The Proton acceptor role is filled by His42. Asn44 is a glycosylation site (N-linked (GlcNAc...) asparagine). Cystine bridges form between Cys50–Cys110, Cys64–Cys123, Cys82–Cys138, and Cys89–Cys98. The residue at position 60 (Tyr60) is a 3'-nitrotyrosine. 65-69 (KNQNT) contacts substrate. 4 N-linked (GlcNAc...) asparagine glycosylation sites follow: Asn86, Asn92, Asn111, and Asn119. The Proton donor role is filled by His156.

It belongs to the pancreatic ribonuclease family. Interacts with and forms a tight 1:1 complex with RNH1. Dimerization of two such complexes may occur.

The protein resides in the lysosome. Its subcellular location is the cytoplasmic granule. It catalyses the reaction an [RNA] containing cytidine + H2O = an [RNA]-3'-cytidine-3'-phosphate + a 5'-hydroxy-ribonucleotide-3'-[RNA].. It carries out the reaction an [RNA] containing uridine + H2O = an [RNA]-3'-uridine-3'-phosphate + a 5'-hydroxy-ribonucleotide-3'-[RNA].. This is a non-secretory ribonuclease. It is a pyrimidine specific nuclease with a slight preference for U. Cytotoxin and helminthotoxin. Possesses a wide variety of biological activities. In Nomascus leucogenys (Northern white-cheeked gibbon), this protein is Non-secretory ribonuclease (RNASE2).